Here is a 131-residue protein sequence, read N- to C-terminus: Conotoxin Cal8.1 (131 aa).

The N-terminal stretch at 1 to 19 (MKLLLTLLLGSALMCITLA) is a signal peptide. Residues 20–38 (DECGLGTHRPVKEVIDNVR) constitute a propeptide that is removed on maturation.

Post-translationally, contains 4 disulfide bonds. In terms of tissue distribution, expressed by the venom duct.

It is found in the secreted. Functionally, probable neurotoxin with unknown target. Possibly targets ion channels. This chain is Conotoxin Cal8.1, found in Californiconus californicus (California cone).